The chain runs to 309 residues: Olfactory receptor 10J5 (309 aa).

Residues 1-27 (MQRNNFTEVIEFVFLGFSSFGKHQITL) lie on the Extracellular side of the membrane. The chain crosses the membrane as a helical span at residues 28-48 (FVVFLTIYILTLAGNIIIVTI). Residues 49-57 (THIDHHLHT) are Cytoplasmic-facing. Residues 58–78 (PMYFFLSMLASSETVYTLVIV) form a helical membrane-spanning segment. At 79-84 (PRMLSS) the chain is on the extracellular side. Residues 85–105 (LIFYNLPISLAGCATQMFFFV) form a helical membrane-spanning segment. Cysteines 97 and 178 form a disulfide. The Cytoplasmic segment spans residues 106–131 (TLATNNCFLLTAMGYDRYVAICNPLR). A helical membrane pass occupies residues 132-152 (YTIIMSKGMCALLVCGSLGTG). The Extracellular portion of the chain corresponds to 153–203 (LVMAVLHVPAMFHLPFCGTVVEHFFCDIYPVMKLSCVDTTVNEIINYGVSS). A helical membrane pass occupies residues 204-224 (FVILVPIGLIFISYVLIVSSI). The Cytoplasmic portion of the chain corresponds to 225–235 (LKIVSTEGQKK). Residues 236-256 (AFATCASHLTVVIVHYGCASI) form a helical membrane-spanning segment. Topologically, residues 257–270 (AYLKPKSESSVEKD) are extracellular. A helical transmembrane segment spans residues 271–291 (LLLSVTYTIITPLLNPVVYSL). Residues 292–309 (RNKEVKDALCRAVGRNTS) lie on the Cytoplasmic side of the membrane.

This sequence belongs to the G-protein coupled receptor 1 family. In terms of tissue distribution, expressed in the olfactory epithelium as well as in the testis. Expressed in round spermatids during stages VI-VIII of spermatogenesis.

The protein resides in the cell membrane. Olfactory receptor. Activated by the synthetic floral odorant, lyral, and by alpha-cedrene, a sesquiterpene constituent of cedarwood oil. Its activation increases intracellular Ca(2+). Acts as a key regulator of myogenesis through its actions on cell migration and adhesion by activating the Ca(2+)-dependent AKT signal transduction pathway. Also acts as a regulator of angiogenesis. Moreover, plays a role in the regulation of lipid accumulation in hepatocytes via the cAMP-PKA pathway. Involved in sperm chemotaxis and motility. The chain is Olfactory receptor 10J5 from Mus musculus (Mouse).